We begin with the raw amino-acid sequence, 37 residues long: Large ribosomal subunit protein bL36 (37 aa).

The protein belongs to the bacterial ribosomal protein bL36 family.

The sequence is that of Large ribosomal subunit protein bL36 from Synechococcus sp. (strain CC9605).